The following is a 232-amino-acid chain: Peptide deformylase (232 aa).

The Fe cation site is built by Cys-135 and His-178. Residue Glu-179 is part of the active site. Residue His-182 participates in Fe cation binding.

It belongs to the polypeptide deformylase family. Requires Fe(2+) as cofactor.

The catalysed reaction is N-terminal N-formyl-L-methionyl-[peptide] + H2O = N-terminal L-methionyl-[peptide] + formate. Functionally, removes the formyl group from the N-terminal Met of newly synthesized proteins. Requires at least a dipeptide for an efficient rate of reaction. N-terminal L-methionine is a prerequisite for activity but the enzyme has broad specificity at other positions. This Deinococcus radiodurans (strain ATCC 13939 / DSM 20539 / JCM 16871 / CCUG 27074 / LMG 4051 / NBRC 15346 / NCIMB 9279 / VKM B-1422 / R1) protein is Peptide deformylase.